A 159-amino-acid polypeptide reads, in one-letter code: Na(+)/H(+) antiporter subunit E1 (159 aa).

A run of 4 helical transmembrane segments spans residues 1–21 (MAVQLVLNFIIAVFWLFVTNS), 27–47 (FVLGFIFGLVLVYLLHRVLPG), 49–69 (FYVITLYRIIKLVIIFLIELI), and 101–121 (WQIVLLSNLITLTPGTVVLGV).

It belongs to the CPA3 antiporters (TC 2.A.63) subunit E family. In terms of assembly, may form a heterooligomeric complex that consists of seven subunits: mnhA1, mnhB1, mnhC1, mnhD1, mnhE1, mnhF1 and mnhG1.

It is found in the cell membrane. Mnh complex is a Na(+)/H(+) antiporter involved in Na(+) excretion. The polypeptide is Na(+)/H(+) antiporter subunit E1 (mnhE1) (Staphylococcus aureus (strain Mu3 / ATCC 700698)).